The primary structure comprises 109 residues: Large ribosomal subunit protein bL19 (109 aa).

This sequence belongs to the bacterial ribosomal protein bL19 family.

Functionally, this protein is located at the 30S-50S ribosomal subunit interface and may play a role in the structure and function of the aminoacyl-tRNA binding site. The protein is Large ribosomal subunit protein bL19 of Rubrobacter xylanophilus (strain DSM 9941 / JCM 11954 / NBRC 16129 / PRD-1).